A 248-amino-acid polypeptide reads, in one-letter code: Clathrin light chain A (248 aa).

Residues 1-93 are disordered; that stretch reads MAELDPFGAP…YQESNGPTDS (93 aa). Gly residues predominate over residues 13 to 25; it reads APGGPALGNGVAG. Residues 100-162 are involved in binding clathrin heavy chain; sequence VDRLQSEPES…QLQKTKASNR (63 aa). Phosphoserine occurs at positions 105 and 206. K223 bears the N6-acetyllysine mark. At S236 the chain carries Phosphoserine. Position 242 is an N6-acetyllysine (K242).

It belongs to the clathrin light chain family. Clathrin coats are formed from molecules containing 3 heavy chains and 3 light chains. Interacts with CALY; the interaction stimulates clathrin self-assembly and clathrin-mediated endocytosis. Interacts with CKAP5 and TACC3 forming the TACC3/ch-TOG/clathrin complex located at spindle inter-microtubules bridges; the complex implicates clathrin triskelions.

It localises to the cytoplasmic vesicle membrane. Its subcellular location is the membrane. It is found in the coated pit. The protein resides in the cytoplasm. The protein localises to the cytoskeleton. It localises to the spindle. Its function is as follows. Clathrin is the major protein of the polyhedral coat of coated pits and vesicles. Acts as a component of the TACC3/ch-TOG/clathrin complex proposed to contribute to stabilization of kinetochore fibers of the mitotic spindle by acting as inter-microtubule bridge. The protein is Clathrin light chain A (Clta) of Rattus norvegicus (Rat).